The following is a 633-amino-acid chain: MKSNYSATNIKILKGLDAVKKRPGMYIGSTDSKGLHHMLWEILANSVDEVLAGYATNITVTLDLNNTITVSDDGRGIPYEIHQDSNISTIDTVFTFLHAGGKFDDQSYKLAGGLHGVGASVVNALSDHLEVTVKRNGQIYQSVYQAGGKIIQKAKKIGDTTSHGTTVSFHADPKVFKKAQFDSNIIKSRLKELSFLFAKLKLTFTDQKTNKTTVFFSTSGLVQFLDEINNTVETLGQKTLIKGEKDGIEVEVVFQFNQSDQETILSFANSIKTFEGGSHENGFCLAISDVINSYCRKYNLLKEKDKNFQLSEIRQGLNAIIKVNLPEKNIAFEGQTKSKLFSKEVKNVVYELVQQHYFQFLERNNNDAKLIIDKLLNARKIKEQIKQQRELKKSLSSPQKEKILFGKLAPCQTKKTSEKELFIVEGDSAGGTAKMGRDRIFQAILPLRGKVLNVEKINNKKEAITNEEILTLIFCIGTGILTNFNIKDLKYGKIIIMTDADNDGAHIQILLLTFFYRYMQPLIELGHVYLALPPLYKLETKDRKTVKYLWSDLELESVKLKLNNFTLQRYKGLGEMNADQLWDTTMNPTTRKLVQVKLDDLINAEKQINIFMGEKSDLRKHWIEANINFSVEN.

ATP-binding positions include Y5, N45, D72, 113–119 (GLHGVGA), and K337. One can recognise a Toprim domain in the interval 419–534 (KELFIVEGDS…LGHVYLALPP (116 aa)). Mg(2+) is bound by residues E425, D499, and D501.

This sequence belongs to the type II topoisomerase family. ParE type 2 subfamily. Heterotetramer composed of ParC and ParE. It depends on Mg(2+) as a cofactor. Requires Mn(2+) as cofactor. The cofactor is Ca(2+).

The catalysed reaction is ATP-dependent breakage, passage and rejoining of double-stranded DNA.. Its function is as follows. Topoisomerase IV is essential for chromosome segregation. It relaxes supercoiled DNA. Performs the decatenation events required during the replication of a circular DNA molecule. The protein is DNA topoisomerase 4 subunit B of Mycoplasma genitalium (strain ATCC 33530 / DSM 19775 / NCTC 10195 / G37) (Mycoplasmoides genitalium).